A 101-amino-acid polypeptide reads, in one-letter code: Phosphoribosyl-AMP cyclohydrolase (101 aa).

D71 provides a ligand contact to Mg(2+). C72 is a binding site for Zn(2+). The Mg(2+) site is built by D73 and D75. The Zn(2+) site is built by C88 and C95.

This sequence belongs to the PRA-CH family. Homodimer. Mg(2+) serves as cofactor. Requires Zn(2+) as cofactor.

The protein resides in the cytoplasm. The catalysed reaction is 1-(5-phospho-beta-D-ribosyl)-5'-AMP + H2O = 1-(5-phospho-beta-D-ribosyl)-5-[(5-phospho-beta-D-ribosylamino)methylideneamino]imidazole-4-carboxamide. Its pathway is amino-acid biosynthesis; L-histidine biosynthesis; L-histidine from 5-phospho-alpha-D-ribose 1-diphosphate: step 3/9. In terms of biological role, catalyzes the hydrolysis of the adenine ring of phosphoribosyl-AMP. The protein is Phosphoribosyl-AMP cyclohydrolase of Bacillus cereus (strain ZK / E33L).